The following is a 325-amino-acid chain: NADH-quinone oxidoreductase subunit H (325 aa).

A run of 8 helical transmembrane segments spans residues 11 to 31 (ILLS…CGAF), 81 to 101 (VIFT…FAIV), 114 to 134 (IGIL…LFAG), 154 to 174 (LSYE…AGSF), 186 to 206 (LWNV…GVAV), 237 to 257 (FFVG…TLFF), 265 to 285 (LPPF…FILI), and 304 to 324 (VCLP…LWQA).

The protein belongs to the complex I subunit 1 family. NDH-1 is composed of 13 different subunits. Subunits NuoA, H, J, K, L, M, N constitute the membrane sector of the complex.

The protein localises to the cell inner membrane. The catalysed reaction is a quinone + NADH + 5 H(+)(in) = a quinol + NAD(+) + 4 H(+)(out). Functionally, NDH-1 shuttles electrons from NADH, via FMN and iron-sulfur (Fe-S) centers, to quinones in the respiratory chain. The immediate electron acceptor for the enzyme in this species is believed to be ubiquinone. Couples the redox reaction to proton translocation (for every two electrons transferred, four hydrogen ions are translocated across the cytoplasmic membrane), and thus conserves the redox energy in a proton gradient. This subunit may bind ubiquinone. In Klebsiella pneumoniae (strain 342), this protein is NADH-quinone oxidoreductase subunit H.